Here is a 225-residue protein sequence, read N- to C-terminus: MRQRILVVDDDASLAEMLTIVLRGEGFDTAVIGDGTQALTAVRELRPDLVLLDLMLPGMNGIDVCRVLRADSGVPIVMLTAKTDTVDVVLGLESGADDYIMKPFKPKELVARVRARLRRNDDEPAEMLSIADVEIDVPAHKVTRNGEQISLTPLEFDLLVALARKPRQVFTRDVLLEQVWGYRHPADTRLVNVHVQRLRAKVEKDPENPTVVLTVRGVGYKAGPP.

The 114-residue stretch at 4-117 folds into the Response regulatory domain; sequence RILVVDDDAS…ELVARVRARL (114 aa). 4-aspartylphosphate is present on Asp53. Positions 125 to 224 form a DNA-binding region, ompR/PhoB-type; that stretch reads AEMLSIADVE…VRGVGYKAGP (100 aa).

Phosphorylated by MtrB.

Its function is as follows. Member of the two-component regulatory system MtrA/MtrB. The chain is DNA-binding response regulator MtrA (mtrA) from Mycolicibacterium paratuberculosis (strain ATCC BAA-968 / K-10) (Mycobacterium paratuberculosis).